A 333-amino-acid polypeptide reads, in one-letter code: Ketol-acid reductoisomerase (NADP(+)) (333 aa).

Residues 1-179 (MFYDDDADLS…GGTRAGVIKT (179 aa)) enclose the KARI N-terminal Rossmann domain. NADP(+) is bound by residues 22–25 (YGSQ), Lys45, Ser48, Ser50, and 80–83 (DTAQ). His105 is a catalytic residue. Gly131 is an NADP(+) binding site. Positions 180–325 (TFKDETETDL…KKLRDLMSWV (146 aa)) constitute a KARI C-terminal knotted domain. Positions 188, 192, 224, and 228 each coordinate Mg(2+). Residue Ser249 coordinates substrate.

It belongs to the ketol-acid reductoisomerase family. The cofactor is Mg(2+).

It catalyses the reaction (2R)-2,3-dihydroxy-3-methylbutanoate + NADP(+) = (2S)-2-acetolactate + NADPH + H(+). The enzyme catalyses (2R,3R)-2,3-dihydroxy-3-methylpentanoate + NADP(+) = (S)-2-ethyl-2-hydroxy-3-oxobutanoate + NADPH + H(+). The protein operates within amino-acid biosynthesis; L-isoleucine biosynthesis; L-isoleucine from 2-oxobutanoate: step 2/4. It participates in amino-acid biosynthesis; L-valine biosynthesis; L-valine from pyruvate: step 2/4. In terms of biological role, involved in the biosynthesis of branched-chain amino acids (BCAA). Catalyzes an alkyl-migration followed by a ketol-acid reduction of (S)-2-acetolactate (S2AL) to yield (R)-2,3-dihydroxy-isovalerate. In the isomerase reaction, S2AL is rearranged via a Mg-dependent methyl migration to produce 3-hydroxy-3-methyl-2-ketobutyrate (HMKB). In the reductase reaction, this 2-ketoacid undergoes a metal-dependent reduction by NADPH to yield (R)-2,3-dihydroxy-isovalerate. The sequence is that of Ketol-acid reductoisomerase (NADP(+)) from Mycobacterium bovis (strain ATCC BAA-935 / AF2122/97).